Consider the following 313-residue polypeptide: Olfactory receptor 4M2 (313 aa).

Topologically, residues 1 to 25 (METANYTKVTEFVLTGLSQTPEVQL) are extracellular. Asn5 carries an N-linked (GlcNAc...) asparagine glycan. The helical transmembrane segment at 26 to 49 (VLFVIFLSFYLFILPGNILIICTI) threads the bilayer. At 50–57 (SLDPHLTS) the chain is on the cytoplasmic side. The helical transmembrane segment at 58–79 (PMYFLLANLAFLDIWYSSITAP) threads the bilayer. Over 80-100 (EMLIDFFVERKIISFDGCIAQ) the chain is Extracellular. A disulfide bond links Cys97 and Cys189. Residues 101–120 (LFFLHFAGASEMFLLTVMAF) form a helical membrane-spanning segment. Residues 121–139 (DLYTAICRPLHYATIMNQR) are Cytoplasmic-facing. A helical membrane pass occupies residues 140–158 (LCCILVALSWRGGFIHSII). Residues 159-195 (QVALIVRLPFCGPNELDSYFCDITQVVRIACANTFPE) are Extracellular-facing. Residues 196-219 (ELVMICSSGLISVVCLIALLMSYA) form a helical membrane-spanning segment. The Cytoplasmic segment spans residues 220-237 (FLLALFKKLSGSGENTNR). The chain crosses the membrane as a helical span at residues 238–260 (AMSTCYSHITIVVLMFGPSIYIY). Over 261–271 (ARPFDSFSLDK) the chain is Extracellular. A helical membrane pass occupies residues 272–291 (VVSVFNTLIFPLRNPIIYTL). Over 292–313 (RNKEVKAAMRKLVTKYILCKEK) the chain is Cytoplasmic.

This sequence belongs to the G-protein coupled receptor 1 family.

It localises to the cell membrane. Functionally, odorant receptor. This is Olfactory receptor 4M2 (OR4M2) from Homo sapiens (Human).